Consider the following 107-residue polypeptide: Endonuclease ALBA3 (107 aa).

N6-acetyllysine occurs at positions 23 and 32.

The protein belongs to the histone-like Alba family. Homodimer. Interacts (acetylated and unacetylated) with Sir2A. Requires a divalent metal cation as cofactor. Acetylated. Exists in both acetylated and unacetylated forms but predominantly in an acetylated form. Deacetylated by Sir2A.

It localises to the nucleus. Its subcellular location is the chromosome. The protein localises to the telomere. The protein resides in the cytoplasm. Mild acetylation lowers protein interaction with DNA and high acetylation abolishes DNA-binding activity. DNA binding and endonuclease activity is modulated via deacetylation of Lys-23 by Sir2A. Inhibited in the presence of EDTA and EGTA. Functionally, possesses DNA-binding and endonuclease activities. Binds DNA cooperatively in sequence-independent manner at the DNA minor groove. Exhibits apurinic/apyrimidinic site-driven endonuclease activity. Binds RNA; shows high affinity for poly(A) and a lower affinity for poly(U) templates. In vitro, prevents transcription after DNA binding. Associates with the telomeric region, the subtelomeric TARE6 repeat sequence and the var gene promoters. This is Endonuclease ALBA3 from Plasmodium falciparum (isolate 3D7).